Reading from the N-terminus, the 262-residue chain is ATP synthase subunit a (262 aa).

A run of 6 helical transmembrane segments spans residues 50-70 (TMIM…ACTK), 107-127 (MMPI…LGLI), 141-161 (FGLA…ANGV), 194-214 (LYGN…LINI), 218-238 (VFGG…VGFV), and 239-259 (QAFV…AHEA).

Belongs to the ATPase A chain family. As to quaternary structure, F-type ATPases have 2 components, CF(1) - the catalytic core - and CF(0) - the membrane proton channel. CF(1) has five subunits: alpha(3), beta(3), gamma(1), delta(1), epsilon(1). CF(0) has three main subunits: a(1), b(2) and c(9-12). The alpha and beta chains form an alternating ring which encloses part of the gamma chain. CF(1) is attached to CF(0) by a central stalk formed by the gamma and epsilon chains, while a peripheral stalk is formed by the delta and b chains.

The protein resides in the cell membrane. In terms of biological role, key component of the proton channel; it plays a direct role in the translocation of protons across the membrane. The polypeptide is ATP synthase subunit a (Desulforamulus reducens (strain ATCC BAA-1160 / DSM 100696 / MI-1) (Desulfotomaculum reducens)).